The following is a 779-amino-acid chain: Glutathione biosynthesis bifunctional protein GshAB (779 aa).

The tract at residues Met1–Ala346 is glutamate--cysteine ligase. In terms of domain architecture, ATP-grasp spans Lys512–Gly768. Pro539–Arg597 is a binding site for ATP. Mg(2+)-binding residues include Asp719, Glu738, and Asn740. Asp719, Glu738, and Asn740 together coordinate Mn(2+).

The protein in the N-terminal section; belongs to the glutamate--cysteine ligase type 1 family. Type 2 subfamily. Monomer. Mg(2+) serves as cofactor. The cofactor is Mn(2+).

The catalysed reaction is L-cysteine + L-glutamate + ATP = gamma-L-glutamyl-L-cysteine + ADP + phosphate + H(+). The enzyme catalyses gamma-L-glutamyl-L-cysteine + glycine + ATP = glutathione + ADP + phosphate + H(+). It participates in sulfur metabolism; glutathione biosynthesis; glutathione from L-cysteine and L-glutamate: step 1/2. The protein operates within sulfur metabolism; glutathione biosynthesis; glutathione from L-cysteine and L-glutamate: step 2/2. Functionally, synthesizes glutathione from L-glutamate and L-cysteine via gamma-L-glutamyl-L-cysteine. In Desulfotalea psychrophila (strain LSv54 / DSM 12343), this protein is Glutathione biosynthesis bifunctional protein GshAB.